A 498-amino-acid chain; its full sequence is ATP synthase subunit beta, chloroplastic (498 aa).

ATP is bound at residue 172 to 179; that stretch reads GGAGVGKT.

Belongs to the ATPase alpha/beta chains family. F-type ATPases have 2 components, CF(1) - the catalytic core - and CF(0) - the membrane proton channel. CF(1) has five subunits: alpha(3), beta(3), gamma(1), delta(1), epsilon(1). CF(0) has four main subunits: a(1), b(1), b'(1) and c(9-12).

The protein localises to the plastid. The protein resides in the chloroplast thylakoid membrane. It catalyses the reaction ATP + H2O + 4 H(+)(in) = ADP + phosphate + 5 H(+)(out). Produces ATP from ADP in the presence of a proton gradient across the membrane. The catalytic sites are hosted primarily by the beta subunits. In Illicium oligandrum (Star anise), this protein is ATP synthase subunit beta, chloroplastic.